Reading from the N-terminus, the 406-residue chain is GTPase Obg (406 aa).

The Obg domain maps to 1–159; sequence MKFVDEVSIH…RDLKLELKVL (159 aa). The segment at 127 to 148 is disordered; that stretch reads NTRFKSSTNRAPRQTTPGKPGE. Over residues 129–143 the composition is skewed to polar residues; it reads RFKSSTNRAPRQTTP. Positions 160–334 constitute an OBG-type G domain; the sequence is ADVGLLGLPN…LSQDIMRYLD (175 aa). GTP contacts are provided by residues 166–173, 191–195, 213–216, 283–286, and 315–317; these read GLPNAGKS, FTTLV, DIPG, NKMD, and SAL. The Mg(2+) site is built by serine 173 and threonine 193. The segment at 382–406 is disordered; it reads AGAVDDDDFDDEEDDGDGPEIFYVP. Over residues 385–399 the composition is skewed to acidic residues; sequence VDDDDFDDEEDDGDG.

The protein belongs to the TRAFAC class OBG-HflX-like GTPase superfamily. OBG GTPase family. Monomer. Mg(2+) is required as a cofactor.

It localises to the cytoplasm. In terms of biological role, an essential GTPase which binds GTP, GDP and possibly (p)ppGpp with moderate affinity, with high nucleotide exchange rates and a fairly low GTP hydrolysis rate. Plays a role in control of the cell cycle, stress response, ribosome biogenesis and in those bacteria that undergo differentiation, in morphogenesis control. This Pseudomonas aeruginosa (strain LESB58) protein is GTPase Obg.